Reading from the N-terminus, the 316-residue chain is Ribosomal protein L11 methyltransferase (316 aa).

T159, G179, D201, and N243 together coordinate S-adenosyl-L-methionine.

It belongs to the methyltransferase superfamily. PrmA family.

Its subcellular location is the cytoplasm. The enzyme catalyses L-lysyl-[protein] + 3 S-adenosyl-L-methionine = N(6),N(6),N(6)-trimethyl-L-lysyl-[protein] + 3 S-adenosyl-L-homocysteine + 3 H(+). Methylates ribosomal protein L11. This chain is Ribosomal protein L11 methyltransferase, found in Gloeobacter violaceus (strain ATCC 29082 / PCC 7421).